A 427-amino-acid polypeptide reads, in one-letter code: Trigger factor (427 aa).

A PPIase FKBP-type domain is found at 163–248 (GDIAVIDFKG…IKSIKVKELP (86 aa)).

The protein belongs to the FKBP-type PPIase family. Tig subfamily.

It localises to the cytoplasm. It carries out the reaction [protein]-peptidylproline (omega=180) = [protein]-peptidylproline (omega=0). Functionally, involved in protein export. Acts as a chaperone by maintaining the newly synthesized protein in an open conformation. Functions as a peptidyl-prolyl cis-trans isomerase. The polypeptide is Trigger factor (Clostridium beijerinckii (strain ATCC 51743 / NCIMB 8052) (Clostridium acetobutylicum)).